A 222-amino-acid chain; its full sequence is UPF0758 protein YicR (222 aa).

In terms of domain architecture, MPN spans 100–222 (PLLSPEMTRE…YVSFAERGWI (123 aa)). His-171, His-173, and Asp-184 together coordinate Zn(2+). Positions 171 to 184 (HNHPSGCAEPSKAD) match the JAMM motif motif.

The protein belongs to the UPF0758 family. YicR subfamily.

This is UPF0758 protein YicR from Escherichia coli (strain 55989 / EAEC).